The primary structure comprises 199 residues: Recombination protein RecR (199 aa).

The segment at 57–72 adopts a C4-type zinc-finger fold; the sequence is CQSCRTYTEETLCPIC. A Toprim domain is found at 81–176; the sequence is STICVVETPA…MISRIAHGVP (96 aa).

Belongs to the RecR family.

Functionally, may play a role in DNA repair. It seems to be involved in an RecBC-independent recombinational process of DNA repair. It may act with RecF and RecO. This is Recombination protein RecR from Shewanella baltica (strain OS155 / ATCC BAA-1091).